A 246-amino-acid polypeptide reads, in one-letter code: E3 ubiquitin-protein ligase LubX (246 aa).

2 consecutive U-box domains span residues 36 to 109 (TTPT…QTNY) and 131 to 204 (EIPD…RKRE).

Interacts with host CLK1. Post-translationally, ubiquitinated in the presence of host E1 ubiquitin-activating enzyme, E2 ubiquitin-conjugating enzyme (UBE2D1 or UBE2D3) and ubiquitin.

The protein localises to the secreted. The protein resides in the host cell. It catalyses the reaction S-ubiquitinyl-[E2 ubiquitin-conjugating enzyme]-L-cysteine + [acceptor protein]-L-lysine = [E2 ubiquitin-conjugating enzyme]-L-cysteine + N(6)-ubiquitinyl-[acceptor protein]-L-lysine.. Its function is as follows. Effector proteins function to alter host cell physiology and promote bacterial survival in host tissues. This protein is an E3 ubiquitin ligase that interferes with host's ubiquitination pathway. Acts in conjunction with host E2 ubiquitin-conjugating enzymes UBE2D1 (UBCH5A) or UBE2D3 (UBCH5C), and mediates polyubiquitination of host kinase CLK1. This chain is E3 ubiquitin-protein ligase LubX (lubX), found in Legionella pneumophila subsp. pneumophila (strain Philadelphia 1 / ATCC 33152 / DSM 7513).